Here is a 225-residue protein sequence, read N- to C-terminus: Small ribosomal subunit protein uS3 (225 aa).

Residues 38–106 (IRKFVQNRFN…PVNLNIIEVK (69 aa)) enclose the KH type-2 domain.

This sequence belongs to the universal ribosomal protein uS3 family. Part of the 30S ribosomal subunit. Forms a tight complex with proteins S10 and S14.

Its function is as follows. Binds the lower part of the 30S subunit head. Binds mRNA in the 70S ribosome, positioning it for translation. In Leptospira interrogans serogroup Icterohaemorrhagiae serovar copenhageni (strain Fiocruz L1-130), this protein is Small ribosomal subunit protein uS3.